We begin with the raw amino-acid sequence, 876 residues long: GATOR2 complex protein MIOS (876 aa).

WD repeat units lie at residues 59-101 (SDTP…NSKS), 112-156 (KHAR…SPEA), 182-222 (GQND…QKTF), 224-262 (NTKAIQGVTVDPHFQDRVASYFEGQVAIWDLRKFEKPVF), 266-307 (EQPK…MPFG), and 400-440 (RAQS…KQYT). The C4-type zinc-finger motif lies at 738-784 (VSCNFCGKSISYSCSAMPHQGRGFSQYGVSGSPTKSKVTSCPGCRKP). The Zn(2+) site is built by cysteine 740, cysteine 743, cysteine 778, cysteine 781, cysteine 791, cysteine 830, cysteine 833, histidine 835, histidine 838, histidine 841, cysteine 852, cysteine 857, and cysteine 861. The segment at 785–866 (LPRCALCLMN…CTCKCMQLDT (82 aa)) adopts an RING-type; atypical zinc-finger fold.

Belongs to the WD repeat mio family. As to quaternary structure, component of the GATOR2 subcomplex, composed of MIOS, SEC13, SEH1L, WDR24 and WDR59. The GATOR2 complex interacts with CASTOR1 and CASTOR2; the interaction is negatively regulated by arginine. The GATOR2 complex interacts with SESN1, SESN2 and SESN3; the interaction is negatively regulated by amino acids. Interacts with SAR1; the interaction is direct, disrupted by leucine and mediates the interaction of SAR1 with the GATOR2 complex to negatively regulate the TORC1 signaling upon leucine deprivation.

Its subcellular location is the lysosome membrane. With respect to regulation, the GATOR2 complex is negatively regulated by the upstream amino acid sensors CASTOR1 and SESN2, which sequester the GATOR2 complex in absence of amino acids. In the presence of abundant amino acids, GATOR2 is released from CASTOR1 and SESN2 and activated. As a component of the GATOR2 complex, functions as an activator of the amino acid-sensing branch of the mTORC1 signaling pathway. The GATOR2 complex indirectly activates mTORC1 through the inhibition of the GATOR1 subcomplex. GATOR2 probably acts as an E3 ubiquitin-protein ligase toward GATOR1. In the presence of abundant amino acids, the GATOR2 complex mediates ubiquitination of the NPRL2 core component of the GATOR1 complex, leading to GATOR1 inactivation. In the absence of amino acids, GATOR2 is inhibited, activating the GATOR1 complex. Within the GATOR2 complex, MIOS is required to prevent autoubiquitination of WDR24, the catalytic subunit of the complex. This chain is GATOR2 complex protein MIOS, found in Danio rerio (Zebrafish).